The chain runs to 953 residues: UvrABC system protein A (953 aa).

Position 33 to 40 (33 to 40) interacts with ATP; sequence GLSGSGKS. 2 ABC transporter domains span residues 320-599 and 619-949; these read WGST…EESI and GHDN…RYLK. 652 to 659 is an ATP binding site; sequence GVSGSGKS. Residues 752–778 form a C4-type zinc finger; the sequence is CEACQGDGLIKIEMHFLPDVYVKCDIC.

This sequence belongs to the ABC transporter superfamily. UvrA family. Forms a heterotetramer with UvrB during the search for lesions.

Its subcellular location is the cytoplasm. Functionally, the UvrABC repair system catalyzes the recognition and processing of DNA lesions. UvrA is an ATPase and a DNA-binding protein. A damage recognition complex composed of 2 UvrA and 2 UvrB subunits scans DNA for abnormalities. When the presence of a lesion has been verified by UvrB, the UvrA molecules dissociate. In Rickettsia prowazekii (strain Madrid E), this protein is UvrABC system protein A.